Reading from the N-terminus, the 438-residue chain is POU domain, class 3, transcription factor 3-A (438 aa).

Disordered stretches follow at residues 22-43, 102-172, and 186-248; these read VHSE…SVSG, SPWS…QSQQ, and GMLN…PTSD. 2 stretches are compositionally biased toward polar residues: residues 103 to 123 and 146 to 159; these read PWSS…VKSS and QSHQ…TASH. Low complexity predominate over residues 160–172; the sequence is ISTITGGQQQSQQ. Residues 210–230 show a composition bias toward basic residues; it reads HHHHHHHQQQHPHHHHHHQHH. A POU-specific domain is found at 242-316; that stretch reads EDTPTSDDLE…LLNKWLEEAD (75 aa). The homeobox DNA-binding region spans 334–393; the sequence is KRKKRTSIEVSVKGALESHFLKCPKPSAQEITSLADNLQLEKEVVRVWFCNRRQKEKRMT.

Belongs to the POU transcription factor family. Class-3 subfamily. In terms of tissue distribution, predominantly expressed in the embryonic and adult central nervous system. In adults, isoform 2 is expressed in the brain, ovary, basal cells of the skin and muscle satellite cells.

It is found in the nucleus. Functionally, transcription factor that may play important roles in patterning the embryonic brain. The polypeptide is POU domain, class 3, transcription factor 3-A (pou3f3a) (Danio rerio (Zebrafish)).